The chain runs to 1270 residues: Microtubule-associated tumor suppressor 1 (1270 aa).

A compositionally biased stretch (acidic residues) spans 1–14 (MTDDNSDDKIEDEL). Disordered regions lie at residues 1–50 (MTDD…NSAN) and 184–236 (FHTA…VTPS). The segment covering 38-50 (NSSASSVNWNSAN) has biased composition (low complexity). T186 carries the post-translational modification Phosphothreonine. Over residues 197-211 (SGSTSSLSYSTWTSS) the composition is skewed to low complexity. The span at 212 to 228 (HSDKTHARETTYDRESF) shows a compositional bias: basic and acidic residues. 3 positions are modified to phosphoserine: S381, S399, and S443. Disordered regions lie at residues 524-560 (DAALSKVTPRPQQTSASSPSSVNSRQQTVLSRTPRSD) and 592-622 (THSKNASHRVPRTTSAVKSNQEDVDKASSSN). The span at 533 to 556 (RPQQTSASSPSSVNSRQQTVLSRT) shows a compositional bias: polar residues. Residue S629 is modified to Phosphoserine. Polar residues-rich tracts occupy residues 701–710 (SKTTTTSGRN), 759–776 (VSSSGKPTSLKTAQSSWV), and 797–815 (TGSTPSIASTHSELSTYSN). Residues 701 to 815 (SKTTTTSGRN…THSELSTYSN (115 aa)) are disordered. The stretch at 940-1231 (IQHLLSEREE…RLSMENEELL (292 aa)) forms a coiled coil. A phosphoserine mark is found at S1203, S1224, S1245, S1255, S1259, S1261, S1264, and S1268. The disordered stretch occupies residues 1237-1270 (GDLCSPKRSPTSSAIPLQSPRNSGSFPSPSISPR). The span at 1244–1270 (RSPTSSAIPLQSPRNSGSFPSPSISPR) shows a compositional bias: polar residues.

Belongs to the MTUS1 family. As to quaternary structure, homodimer. Interacts with AGTR2. Interacts with PTPN6. Isoform 1 associates with microtubules. As to expression, ubiquitously expressed (at protein level). Highly expressed in brain. Down-regulated in ovarian carcinoma, pancreas carcinoma, colon carcinoma and head and neck squamous cell carcinoma (HNSCC). Isoform 1 is the major isoform in most peripheral tissues. Isoform 2 is abundant in most peripheral tissues. Isoform 3 is the major isoform in brain, female reproductive tissues, thyroid and heart. Within brain it is highly expressed in corpus callosum and pons. Isoform 6 is brain-specific, it is the major isoform in cerebellum and fetal brain.

The protein resides in the mitochondrion. It is found in the golgi apparatus. The protein localises to the cell membrane. It localises to the nucleus. Its subcellular location is the cytoplasm. The protein resides in the cytoskeleton. It is found in the microtubule organizing center. The protein localises to the centrosome. It localises to the spindle. Cooperates with AGTR2 to inhibit ERK2 activation and cell proliferation. May be required for AGTR2 cell surface expression. Together with PTPN6, induces UBE2V2 expression upon angiotensin-II stimulation. Isoform 1 inhibits breast cancer cell proliferation, delays the progression of mitosis by prolonging metaphase and reduces tumor growth. In Homo sapiens (Human), this protein is Microtubule-associated tumor suppressor 1 (MTUS1).